We begin with the raw amino-acid sequence, 190 residues long: Ras-like GTP-binding protein RhoL (190 aa).

GTP is bound at residue Gly-18–Thr-25. The short motif at Tyr-40–His-48 is the Effector region element. Residues Asp-65–Gln-69 and Thr-123–Asp-126 contribute to the GTP site. Cys-187 is subject to Cysteine methyl ester. Residue Cys-187 is the site of S-geranylgeranyl cysteine attachment. Residues Lys-188–Leu-190 constitute a propeptide, removed in mature form.

It belongs to the small GTPase superfamily. Rho family. In terms of tissue distribution, highly expressed in the embryonic cephalic mesoderm starting from stage 6 and fading by stage 11. Hemocyte precursor cells.

Its subcellular location is the cell membrane. In terms of biological role, essential for the maturation of hemocytes. The sequence is that of Ras-like GTP-binding protein RhoL (RhoL) from Drosophila melanogaster (Fruit fly).